A 266-amino-acid chain; its full sequence is Small ribosomal subunit protein eS1 (266 aa).

Residues 234-266 (EGGTGTATKATGDDTGAKVERADGYEPPIQETV) are disordered. Positions 244–257 (TGDDTGAKVERADG) are enriched in basic and acidic residues.

It belongs to the eukaryotic ribosomal protein eS1 family. In terms of assembly, component of the small ribosomal subunit. Mature ribosomes consist of a small (40S) and a large (60S) subunit. The 40S subunit contains about 33 different proteins and 1 molecule of RNA (18S). The 60S subunit contains about 49 different proteins and 3 molecules of RNA (28S, 5.8S and 5S). Part of the small subunit (SSU) processome, composed of more than 70 proteins and the RNA chaperone small nucleolar RNA (snoRNA) U3.

Its subcellular location is the cytoplasm. It localises to the nucleus. The protein resides in the nucleolus. Its function is as follows. Component of the small ribosomal subunit. The ribosome is a large ribonucleoprotein complex responsible for the synthesis of proteins in the cell. Part of the small subunit (SSU) processome, first precursor of the small eukaryotic ribosomal subunit. During the assembly of the SSU processome in the nucleolus, many ribosome biogenesis factors, an RNA chaperone and ribosomal proteins associate with the nascent pre-rRNA and work in concert to generate RNA folding, modifications, rearrangements and cleavage as well as targeted degradation of pre-ribosomal RNA by the RNA exosome. May play a role during erythropoiesis. The chain is Small ribosomal subunit protein eS1 (rps3a) from Solea senegalensis (Senegalese sole).